We begin with the raw amino-acid sequence, 1038 residues long: Ribosome quality control complex subunit 2 (1038 aa).

Residues 350-383 adopt a coiled-coil conformation; the sequence is ALRIQNQESQAQKKIDDARAENDRKIQALLDVQE. Disordered stretches follow at residues 459 to 499, 708 to 824, and 877 to 898; these read LNTS…MKRK, KTSG…DEPG, and QRKK…KREK. Residues 713-768 adopt a coiled-coil conformation; it reads EDNGDDDEEEEEEEEEEEEEEEEEEEEEEEEKEEEEKEEEQQQDEDDSNEVNGLEK. A compositionally biased stretch (acidic residues) spans 714-761; sequence DNGDDDEEEEEEEEEEEEEEEEEEEEEEEEKEEEEKEEEQQQDEDDSN. Residues 780 to 794 show a composition bias toward basic and acidic residues; sequence SFEHDNLEKDIEKHC. Positions 795 to 805 are enriched in polar residues; the sequence is TISSDTDSDSG. A Phosphoserine modification is found at Ser-797. The stretch at 830–912 forms a coiled coil; it reads IENINSNVRG…QALKFTKKEK (83 aa). The segment covering 877–894 has biased composition (basic and acidic residues); it reads QRKKEEIMKREVREDRKN.

The protein belongs to the NEMF family. Component of the ribosome quality control complex (RQC), composed of the E3 ubiquitin ligase RKR1/LTN1, RQC1 and RQC2, as well as CDC48 and its ubiquitin-binding cofactors associated with the 60S ribosomal subunit. RQC2 binds to the 40S-binding surface of tRNAs.

The protein localises to the cytoplasm. In terms of biological role, key component of the ribosome quality control complex (RQC), a ribosome-associated complex that mediates the extraction of incompletely synthesized nascent chains from stalled ribosomes as well as their ubiquitin-mediated proteasomal degradation. Thereby, frees 60S subunit ribosomes from the stalled translation complex and prevents the accumulation of nascent polypeptide chains that are potentially toxic for the cell. Within the RQC complex, RQC2 specifically binds stalled 60S ribosomal subunits by recognizing an exposed, nascent chain-conjugated tRNA moiety and promotes the recruitment of RKR1/LTN1 to stalled 60S subunits. Following binding to stalled 60S ribosomal subunits, RQC2 mediates CAT tailing by recruiting alanine- and threonine-charged tRNA to the A-site and directing the elongation of stalled nascent chains independently of mRNA or 40S subunits, leading to non-templated C-terminal Ala and Thr extensions (CAT tails). CAT tails promote the RKR1/LTN1-mediated ubiquitination of incompletely synthesized nascent polypeptides: CAT tailing facilitates RKR1/LTN1-dependent ubiquitination by exposing lysine residues that would otherwise remain buried in the ribosomal exit tunnel. Following ubiquitination, incompletely synthesized nascent polypeptides are recognized by CDC48 and degraded by the proteasome. CAT-tailed proteins tend to aggregate and sequester chaperones and can induce proteotoxic stress; their RKR1/LTN1-dependent ubiquitination and degradation is required to prevent proteotoxic stress. This chain is Ribosome quality control complex subunit 2, found in Saccharomyces cerevisiae (strain ATCC 204508 / S288c) (Baker's yeast).